The sequence spans 262 residues: 3-methyl-2-oxobutanoate hydroxymethyltransferase (262 aa).

2 residues coordinate Mg(2+): aspartate 43 and aspartate 82. Residues 43-44 (DS), aspartate 82, and lysine 110 contribute to the 3-methyl-2-oxobutanoate site. Residue glutamate 112 participates in Mg(2+) binding. Glutamate 179 acts as the Proton acceptor in catalysis.

This sequence belongs to the PanB family. As to quaternary structure, homodecamer; pentamer of dimers. Requires Mg(2+) as cofactor.

The protein resides in the cytoplasm. The catalysed reaction is 3-methyl-2-oxobutanoate + (6R)-5,10-methylene-5,6,7,8-tetrahydrofolate + H2O = 2-dehydropantoate + (6S)-5,6,7,8-tetrahydrofolate. Its pathway is cofactor biosynthesis; (R)-pantothenate biosynthesis; (R)-pantoate from 3-methyl-2-oxobutanoate: step 1/2. Functionally, catalyzes the reversible reaction in which hydroxymethyl group from 5,10-methylenetetrahydrofolate is transferred onto alpha-ketoisovalerate to form ketopantoate. The protein is 3-methyl-2-oxobutanoate hydroxymethyltransferase of Sodalis glossinidius (strain morsitans).